The chain runs to 513 residues: GMP synthase [glutamine-hydrolyzing] (513 aa).

Positions 8–198 (KIIVLDYGSQ…ALNICGAKGN (191 aa)) constitute a Glutamine amidotransferase type-1 domain. Cysteine 85 (nucleophile) is an active-site residue. Catalysis depends on residues histidine 172 and glutamate 174. Residues 199-388 (WSMENFIDMQ…LGMPDEIVWR (190 aa)) enclose the GMPS ATP-PPase domain. 226–232 (SGGVDSS) contacts ATP.

As to quaternary structure, homodimer.

The catalysed reaction is XMP + L-glutamine + ATP + H2O = GMP + L-glutamate + AMP + diphosphate + 2 H(+). It participates in purine metabolism; GMP biosynthesis; GMP from XMP (L-Gln route): step 1/1. In terms of biological role, catalyzes the synthesis of GMP from XMP. The sequence is that of GMP synthase [glutamine-hydrolyzing] (guaA) from Lactococcus lactis subsp. lactis (strain IL1403) (Streptococcus lactis).